We begin with the raw amino-acid sequence, 523 residues long: Sucrose 6(F)-phosphate phosphorylase (523 aa).

Residues Asp-58, His-96, 221–223, Glu-264, 326–327, and Lys-434 each bind sucrose 6(F)-phosphate; these read RLD and HD. The active-site Nucleophile is Asp-223. The active-site Proton donor/acceptor is the Glu-264.

Belongs to the glycosyl hydrolase 13 family. Sucrose phosphorylase subfamily. In terms of assembly, monomer.

The enzyme catalyses sucrose 6(F)-phosphate + phosphate = beta-D-fructose 6-phosphate + alpha-D-glucose 1-phosphate. Its function is as follows. Catalyzes the reversible phosphorolysis of sucrose 6(F)-phosphate into alpha-D-glucose 1-phosphate (Glc1P) and D-fructose 6-phosphate. May be involved in a new pathway for the degradation of sucrose, which could become phosphorylated on its fructose moiety during uptake via a PTS system. Shows strict specificity since it does not catalyze reactions with alternative substrates. This Ilumatobacter coccineus (strain NBRC 103263 / KCTC 29153 / YM16-304) protein is Sucrose 6(F)-phosphate phosphorylase.